The primary structure comprises 258 residues: Transmembrane O-methyltransferase homolog (258 aa).

Residues Glu-104, 106–107 (GT), Ser-112, Glu-130, and Ser-160 contribute to the S-adenosyl-L-methionine site.

This sequence belongs to the class I-like SAM-binding methyltransferase superfamily. Cation-dependent O-methyltransferase family. Interacts with LHFPL5, PCDH15, TMC1, TMC2 and TMIE. The interaction of TOMT with TMC1 and TMC2 is required for the transportation of TMC1/2 into the stereocilia of hair cells. Interacts directly with TMC1. Widely expressed with high levels in outer and inner hair cells of the cochlea and vestibule.

Its subcellular location is the cytoplasm. The protein localises to the endoplasmic reticulum. It carries out the reaction a catechol + S-adenosyl-L-methionine = a guaiacol + S-adenosyl-L-homocysteine + H(+). Functionally, catalyzes the O-methylation, and thereby the inactivation, of catecholamine neurotransmitters and catechol hormones. Required for auditory function. Component of the cochlear hair cell's mechanotransduction (MET) machinery. Involved in the assembly of the asymmetric tip-link MET complex. Required for transportation of TMC1 and TMC2 proteins into the mechanically sensitive stereocilia of the hair cells. The function in MET is independent of the enzymatic activity. This Mus musculus (Mouse) protein is Transmembrane O-methyltransferase homolog.